We begin with the raw amino-acid sequence, 96 residues long: Teretoxin Tan6.14 (96 aa).

The N-terminal stretch at 1 to 21 (MRPLLVFVLMVSVSLAFSLEG) is a signal peptide. The propeptide occupies 22–60 (MPNNGGDSVASITANQARRFKRNPLFSFAQHSLVDLKAR).

Post-translationally, contains 3 disulfide bonds. In terms of tissue distribution, expressed by the venom duct.

It is found in the secreted. The chain is Teretoxin Tan6.14 from Terebra anilis (Auger snail).